A 1011-amino-acid polypeptide reads, in one-letter code: Protein FAM83B (1011 aa).

Positions 1–283 are DUF1669; the sequence is METSSMLSSL…RTLYARSCVP (283 aa). A required for interaction with RAF1 and for the function region spans residues 1-284; sequence METSSMLSSL…TLYARSCVPS (284 aa). 5 positions are modified to phosphoserine: Ser334, Ser422, Ser424, Ser466, and Ser543. The tract at residues 555 to 585 is disordered; it reads EVNSCTTGSSNSTIIGSQGSETPKEVPDTPT. The segment covering 557-574 has biased composition (low complexity); the sequence is NSCTTGSSNSTIIGSQGS. At Ser664 the chain carries Phosphoserine. Disordered regions lie at residues 691–738 and 750–769; these read NRVR…TKSV and ESNK…SFLK. The segment covering 694–705 has biased composition (basic and acidic residues); it reads RQPEKPKEDLLK. Polar residues-rich tracts occupy residues 706–715 and 727–738; these read SSKSMHNVTH and RNSPSGTTTKSV. Basic and acidic residues predominate over residues 750–762; it reads ESNKELASKKEVK. Thr782 is subject to Phosphothreonine. Residue Ser802 is modified to Phosphoserine. A disordered region spans residues 807–928; the sequence is LVSEGEENQK…TSSELLRSHS (122 aa). Residues 813-828 are compositionally biased toward basic and acidic residues; it reads ENQKPKKSDTKVDSSP. A phosphoserine mark is found at Ser852, Ser869, and Ser915. Residues 913-923 show a composition bias toward low complexity; that stretch reads TSSPRPTSSEL.

The protein belongs to the FAM83 family. In terms of assembly, interacts with EGFR; positively regulates EGFR inducing its autophosphorylation in absence of stimulation by EGF. Interacts with RAF1; displaces 14-3-3 proteins from RAF1 and activates RAF1 within the RAS/MAPK signaling cascade. Interacts with AKT1, PIK3CA and PIK3R1; activates the PI3K/AKT signaling cascade. Directly interacts (via DUF1669) with casein kinase isoforms CSNK1A1, CSNK1A1L, CSNK1D and CSNK1E. Phosphorylated in vitro by CSNK1A1.

The protein resides in the cytoplasm. The protein localises to the membrane. Its function is as follows. Probable proto-oncogene that functions in the epidermal growth factor receptor/EGFR signaling pathway. Activates both the EGFR itself and downstream RAS/MAPK and PI3K/AKT/TOR signaling cascades. The sequence is that of Protein FAM83B from Homo sapiens (Human).